Reading from the N-terminus, the 95-residue chain is Acylphosphatase (95 aa).

The Acylphosphatase-like domain maps to 8–95; it reads RAKILVRGKV…GNFRTFEIKK (88 aa). Residues R23 and N41 contribute to the active site.

The protein belongs to the acylphosphatase family.

The catalysed reaction is an acyl phosphate + H2O = a carboxylate + phosphate + H(+). The sequence is that of Acylphosphatase (acyP) from Leptospira interrogans serogroup Icterohaemorrhagiae serovar copenhageni (strain Fiocruz L1-130).